The sequence spans 239 residues: Pyrroloquinoline-quinone synthase (239 aa).

This sequence belongs to the PqqC family.

It carries out the reaction 6-(2-amino-2-carboxyethyl)-7,8-dioxo-1,2,3,4,7,8-hexahydroquinoline-2,4-dicarboxylate + 3 O2 = pyrroloquinoline quinone + 2 H2O2 + 2 H2O + H(+). It functions in the pathway cofactor biosynthesis; pyrroloquinoline quinone biosynthesis. Its function is as follows. Ring cyclization and eight-electron oxidation of 3a-(2-amino-2-carboxyethyl)-4,5-dioxo-4,5,6,7,8,9-hexahydroquinoline-7,9-dicarboxylic-acid to PQQ. The chain is Pyrroloquinoline-quinone synthase from Gluconobacter oxydans (strain 621H) (Gluconobacter suboxydans).